The following is a 354-amino-acid chain: MNEAIIQLDHIDITFHQKKRVIEAVKDVTVHINQGDIYGIVGYSGAGKSTLVRVINLLQAPTNGKITVDGDVTFDQGKIQLSAEALRQKRRDIGMIFQHFNLMAQKTAKENVAFALRHSSLSKTEKEQKVIELLELVGLSERADNYPAQLSGGQKQRVAIARALANDPKILISDEATSALDPKTTKQILALLQELNRKLGLTIVMITHEMQIVKDICNRVAVMQNGVLIEEGPVLDIFSNPKEALTQEFITTATGIDEALEKINQQDIVKHLPANALLAQLKYAGTSTDEPLLNSIYRQFEVTANILYGNIEILDHIPVGDMIVVLEGQAENILAAEKALHEAGVDVSILKRGA.

The region spanning 8-250 (LDHIDITFHQ…PKEALTQEFI (243 aa)) is the ABC transporter domain. 42–49 (GYSGAGKS) lines the ATP pocket.

This sequence belongs to the ABC transporter superfamily. Methionine importer (TC 3.A.1.24) family. As to quaternary structure, the complex is composed of two ATP-binding proteins (MetN), two transmembrane proteins (MetI) and a solute-binding protein (MetQ).

It is found in the cell membrane. The catalysed reaction is L-methionine(out) + ATP + H2O = L-methionine(in) + ADP + phosphate + H(+). It carries out the reaction D-methionine(out) + ATP + H2O = D-methionine(in) + ADP + phosphate + H(+). Part of the ABC transporter complex MetNIQ involved in methionine import. Responsible for energy coupling to the transport system. The sequence is that of Methionine import ATP-binding protein MetN from Streptococcus pyogenes serotype M4 (strain MGAS10750).